A 248-amino-acid polypeptide reads, in one-letter code: 1-(5-phosphoribosyl)-5-[(5-phosphoribosylamino)methylideneamino] imidazole-4-carboxamide isomerase (248 aa).

The active-site Proton acceptor is the D11. D132 serves as the catalytic Proton donor.

The protein belongs to the HisA/HisF family.

Its subcellular location is the cytoplasm. The enzyme catalyses 1-(5-phospho-beta-D-ribosyl)-5-[(5-phospho-beta-D-ribosylamino)methylideneamino]imidazole-4-carboxamide = 5-[(5-phospho-1-deoxy-D-ribulos-1-ylimino)methylamino]-1-(5-phospho-beta-D-ribosyl)imidazole-4-carboxamide. The protein operates within amino-acid biosynthesis; L-histidine biosynthesis; L-histidine from 5-phospho-alpha-D-ribose 1-diphosphate: step 4/9. This chain is 1-(5-phosphoribosyl)-5-[(5-phosphoribosylamino)methylideneamino] imidazole-4-carboxamide isomerase, found in Bradyrhizobium diazoefficiens (strain JCM 10833 / BCRC 13528 / IAM 13628 / NBRC 14792 / USDA 110).